Reading from the N-terminus, the 403-residue chain is Calcium-responsive transactivator (403 aa).

The interval 1–148 is N-terminal auto-inhibitory domain; the sequence is MSVAFASARP…TLPTTTMSMA (148 aa). The SH2-binding motif lies at 50–53; the sequence is YQQI. Disordered regions lie at residues 72 to 111, 152 to 171, 224 to 303, and 318 to 403; these read QSLLPAPPTQNMNLGPGGMSQTGPSQTLHSQGNLSEALGS, HGSAPGYSHTVPSSQNVPMQ, NQSS…RTFE, and SQQQ…NYQQ. Composition is skewed to polar residues over residues 92 to 105 and 161 to 171; these read QTGPSQTLHSQGNL and TVPSSQNVPMQ. The segment at 149–238 is methionine-rich intra-molecular domain; the sequence is VSTHGSAPGY…GSSMMGQRPL (90 aa). Positions 224 to 235 are enriched in low complexity; that stretch reads NQSSQGSSMMGQ. The interval 252–324 is MFD domain; the sequence is YLGQEEYYSE…AQYSQQQTGY (73 aa). Polar residues predominate over residues 263 to 277; the sequence is YGHSQGSSEAMTPQY. Residues 286–296 are compositionally biased toward low complexity; it reads YSYQQSSYGEQ. Residues 341–403 are necessary for nuclear localization; the sequence is NQQNYPGQQQ…EQGQYGNYQQ (63 aa). An SH2-binding motif is present at residues 360–363; the sequence is SQYS. The SH3-binding motif lies at 378 to 386; sequence TSQTTSTAQ. The short motif at 398 to 401 is the SH2-binding element; sequence YGNY.

Belongs to the SS18 family. Homodimer.

The protein localises to the nucleus. Transcriptional activator which may be required for calcium-dependent dendritic growth and branching in cortical neurons. This chain is Calcium-responsive transactivator (ss18l1), found in Xenopus laevis (African clawed frog).